The sequence spans 312 residues: R2-like ligand binding oxidase (312 aa).

Positions 68, 101, and 104 each coordinate Mn(2+). A cross-link (3-(O4'-tyrosyl)-valine (Val-Tyr)) is located at residues 71 to 162; sequence VTQDIQPFMA…AAQVRASVTY (92 aa). Residue glutamate 101 participates in Fe cation binding. The Fe cation site is built by glutamate 167, glutamate 202, and histidine 205.

It belongs to the ribonucleoside diphosphate reductase small chain family. R2-like ligand binding oxidase subfamily. In terms of assembly, homodimer. Requires Fe cation as cofactor. Mn(2+) is required as a cofactor.

In terms of biological role, probable oxidase that might be involved in lipid metabolism. This chain is R2-like ligand binding oxidase, found in Mycolicibacterium vanbaalenii (strain DSM 7251 / JCM 13017 / BCRC 16820 / KCTC 9966 / NRRL B-24157 / PYR-1) (Mycobacterium vanbaalenii).